An 875-amino-acid chain; its full sequence is Probable ATP-dependent RNA helicase DDX10 (875 aa).

The disordered stretch occupies residues 1–44 (MGKTVASLGQGTRPDPVRSFNRWKKKHSHRQHQKKERRKQLKKP). Phosphothreonine is present on Thr4. Residue Ser7 is modified to Phosphoserine. Over residues 21–41 (NRWKKKHSHRQHQKKERRKQL) the composition is skewed to basic residues. The Q motif signature appears at 69-97 (TRFSDFPLSKKTLKGLQEAQYRLVTEIQK). ATP contacts are provided by residues 89–91 (YRL), Gln96, and 113–120 (AKTGSGKT). Positions 100–274 (IGLALQGKDV…RLSLKDPEYV (175 aa)) constitute a Helicase ATP-binding domain. Residues 222–225 (DEAD) carry the DEAD box motif. Residues 300–449 (KISVLFSFLR…EIKINPEKLI (150 aa)) form the Helicase C-terminal domain. The interval 525 to 612 (LVKNPVTEAV…HTESVVSIEE (88 aa)) is disordered. At Ser540 the chain carries Phosphoserine. The residue at position 556 (Lys556) is an N6-acetyllysine. Residues 562–575 (KSGERLEETEHRLA) show a composition bias toward basic and acidic residues. Residues 578–593 (DGDEEQDEETEDEETE) show a composition bias toward acidic residues. Residue Thr587 is modified to Phosphothreonine. The segment covering 594–604 (DHLGKAREPHT) has biased composition (basic and acidic residues). A Glycyl lysine isopeptide (Lys-Gly) (interchain with G-Cter in SUMO2) cross-link involves residue Lys652. Over residues 734-744 (EEDKFDKEEYR) the composition is skewed to basic and acidic residues. The tract at residues 734–860 (EEDKFDKEEY…VEPLDTGLSL (127 aa)) is disordered. The span at 745–754 (KKIKAKHRER) shows a compositional bias: basic residues. Residues 755–774 (RLKEREARREANKRQAKARD) show a composition bias toward basic and acidic residues. Positions 775–789 (EEEAFLDWSDEDDGG) are enriched in acidic residues. Phosphoserine is present on Ser783. Basic and acidic residues predominate over residues 797 to 831 (DPDKHRSSEESESEDTNHKMSDTKKKQETRKRNNT).

The protein belongs to the DEAD box helicase family. DDX10/DBP4 subfamily. Interacts with AIM2; this interaction promotes AIM2 stability. Interacts with SCNA; this interaction causes DDX10 mislocalization to the nucleoplasm and cytoplasmic inclusions.

Its subcellular location is the cytoplasm. The protein localises to the nucleus. It is found in the nucleolus. It catalyses the reaction ATP + H2O = ADP + phosphate + H(+). Putative ATP-dependent RNA helicase that plays various role in innate immunity or inflammation. Plays a role in the enhancement of AIM2-induced inflammasome activation by interacting with AIM2 and stabilizing its protein level. Negatively regulates viral infection by promoting interferon beta production and interferon stimulated genes/ISGs expression. This is Probable ATP-dependent RNA helicase DDX10 (Ddx10) from Mus musculus (Mouse).